Consider the following 677-residue polypeptide: Methionine--tRNA ligase (677 aa).

Residues 15–25 (PYANGSIHLGH) carry the 'HIGH' region motif. Cys-146, Cys-149, Cys-159, and Cys-162 together coordinate Zn(2+). The short motif at 333-337 (KMSKS) is the 'KMSKS' region element. Lys-336 is a binding site for ATP. A tRNA-binding domain is found at 575-677 (DFAKVDLRVA…AGAKPGHQVK (103 aa)).

Belongs to the class-I aminoacyl-tRNA synthetase family. MetG type 1 subfamily. In terms of assembly, homodimer. The cofactor is Zn(2+).

The protein localises to the cytoplasm. The catalysed reaction is tRNA(Met) + L-methionine + ATP = L-methionyl-tRNA(Met) + AMP + diphosphate. Its function is as follows. Is required not only for elongation of protein synthesis but also for the initiation of all mRNA translation through initiator tRNA(fMet) aminoacylation. This Shigella flexneri serotype 5b (strain 8401) protein is Methionine--tRNA ligase.